Reading from the N-terminus, the 369-residue chain is tRNA 2-selenouridine synthase (369 aa).

One can recognise a Rhodanese domain in the interval 12–136; it reads FLDDIPLMDV…LRNFLFETTR (125 aa). C95 serves as the catalytic S-selanylcysteine intermediate.

This sequence belongs to the SelU family. Monomer.

It catalyses the reaction 5-methylaminomethyl-2-thiouridine(34) in tRNA + selenophosphate + (2E)-geranyl diphosphate + H2O + H(+) = 5-methylaminomethyl-2-selenouridine(34) in tRNA + (2E)-thiogeraniol + phosphate + diphosphate. The catalysed reaction is 5-methylaminomethyl-2-thiouridine(34) in tRNA + (2E)-geranyl diphosphate = 5-methylaminomethyl-S-(2E)-geranyl-thiouridine(34) in tRNA + diphosphate. It carries out the reaction 5-methylaminomethyl-S-(2E)-geranyl-thiouridine(34) in tRNA + selenophosphate + H(+) = 5-methylaminomethyl-2-(Se-phospho)selenouridine(34) in tRNA + (2E)-thiogeraniol. The enzyme catalyses 5-methylaminomethyl-2-(Se-phospho)selenouridine(34) in tRNA + H2O = 5-methylaminomethyl-2-selenouridine(34) in tRNA + phosphate. Its function is as follows. Involved in the post-transcriptional modification of the uridine at the wobble position (U34) of tRNA(Lys), tRNA(Glu) and tRNA(Gln). Catalyzes the conversion of 2-thiouridine (S2U-RNA) to 2-selenouridine (Se2U-RNA). Acts in a two-step process involving geranylation of 2-thiouridine (S2U) to S-geranyl-2-thiouridine (geS2U) and subsequent selenation of the latter derivative to 2-selenouridine (Se2U) in the tRNA chain. The protein is tRNA 2-selenouridine synthase of Pseudomonas aeruginosa (strain ATCC 15692 / DSM 22644 / CIP 104116 / JCM 14847 / LMG 12228 / 1C / PRS 101 / PAO1).